The sequence spans 173 residues: Small ribosomal subunit protein uS11m (173 aa).

Belongs to the universal ribosomal protein uS11 family.

The protein localises to the mitochondrion. The polypeptide is Small ribosomal subunit protein uS11m (RPS11) (Acanthamoeba castellanii (Amoeba)).